The primary structure comprises 58 residues: Large ribosomal subunit protein uL30 (58 aa).

Belongs to the universal ribosomal protein uL30 family. Part of the 50S ribosomal subunit.

The polypeptide is Large ribosomal subunit protein uL30 (Desulfovibrio desulfuricans (strain ATCC 27774 / DSM 6949 / MB)).